The sequence spans 420 residues: Cysteate-C-fatty acyltransferase (420 aa).

Residues 114–115 (GY), histidine 219, threonine 247, and alanine 249 contribute to the pyridoxal 5'-phosphate site. An N6-(pyridoxal phosphate)lysine modification is found at lysine 250.

The protein belongs to the class-II pyridoxal-phosphate-dependent aminotransferase family. It depends on pyridoxal 5'-phosphate as a cofactor.

The enzyme catalyses isopentadecanoyl-CoA + L-cysteate + H(+) = 3-oxocapnine + CO2 + CoA. The protein operates within lipid metabolism. Transferase involved in the biosynthesis of capnine, a sulfonolipid present in the outer membrane of gliding Bacteroidetes and essential for gliding motility. Catalyzes the formation of 3-dehydrocapnine from cysteate and isopentadecanoyl-CoA (13-methyl-myristoyl-CoA). In vitro, products are also detected when 13-methyl-myristic acid is substituted with tridecylic acid, myristic acid, pentadecanoic acid or palmitic acid. The chain is Cysteate-C-fatty acyltransferase from Capnocytophaga ochracea (strain ATCC 27872 / DSM 7271 / CCUG 9716 / JCM 12966 / NCTC 12371 / SS31 / VPI 2845) (Bacteroides ochraceus).